Consider the following 649-residue polypeptide: Acetyl-coenzyme A synthetase (649 aa).

CoA contacts are provided by residues 189–192, Thr311, and Asn335; that span reads RGGK. Residues 387-389, 411-416, Asp500, and Arg515 each bind ATP; these read GEP and DTWWQT. Ser523 serves as a coordination point for CoA. Residue Arg526 coordinates ATP. Positions 537, 539, and 542 each coordinate Mg(2+). Residue Arg584 participates in CoA binding. N6-acetyllysine is present on Lys609.

It belongs to the ATP-dependent AMP-binding enzyme family. Mg(2+) is required as a cofactor. Post-translationally, acetylated. Deacetylation by the SIR2-homolog deacetylase activates the enzyme.

It catalyses the reaction acetate + ATP + CoA = acetyl-CoA + AMP + diphosphate. Functionally, catalyzes the conversion of acetate into acetyl-CoA (AcCoA), an essential intermediate at the junction of anabolic and catabolic pathways. AcsA undergoes a two-step reaction. In the first half reaction, AcsA combines acetate with ATP to form acetyl-adenylate (AcAMP) intermediate. In the second half reaction, it can then transfer the acetyl group from AcAMP to the sulfhydryl group of CoA, forming the product AcCoA. The protein is Acetyl-coenzyme A synthetase of Rhizobium meliloti (strain 1021) (Ensifer meliloti).